Consider the following 80-residue polypeptide: Small ribosomal subunit protein uS17 (80 aa).

The protein belongs to the universal ribosomal protein uS17 family. As to quaternary structure, part of the 30S ribosomal subunit.

One of the primary rRNA binding proteins, it binds specifically to the 5'-end of 16S ribosomal RNA. The chain is Small ribosomal subunit protein uS17 from Beijerinckia indica subsp. indica (strain ATCC 9039 / DSM 1715 / NCIMB 8712).